Here is a 44-residue protein sequence, read N- to C-terminus: Protein non-structural 7b (44 aa).

The helical transmembrane segment at 9–29 (FYLCFLAFLLFLVLIMLIIFW) threads the bilayer.

The protein resides in the host membrane. This is Protein non-structural 7b from Homo sapiens (Human).